The sequence spans 564 residues: Protein CPR-5 (564 aa).

The interval 1-87 (MEALLLPPSP…TSNSNSTKRV (87 aa)) is disordered. Polar residues predominate over residues 12–28 (PQNQITNPANSKPNHQS). Residues 29–38 (GDVHKDETMM) are compositionally biased toward basic and acidic residues. The span at 69 to 84 (SSSYCSTSSTSNSNST) shows a compositional bias: low complexity. 5 helical membrane passes run 347-367 (IMDWLLVSVFSMLASMVLGVY), 411-431 (VRVWVQIFFGVLMIIVFTYFL), 443-463 (PISFIVLFLGIFCGVSGKLCV), 472-492 (LWLIVWEVFCLLQFVANVFTL), and 526-546 (VYVVILFVLPVINGLLPFATF).

As to quaternary structure, interacts with SIM and SMR1. In terms of tissue distribution, ubiquitous.

Its subcellular location is the membrane. It is found in the nucleus membrane. May play a role in transcriptional processes. Negatively regulates the senescence and chlorotic lesions induced by biotic (e.g. pathogens) and abiotic (e.g. sugars, darkness) agents, probably by controlling programmed cell death (pcd). Negative regulator of plant programmed cell death (PCD) and effector-triggered immunity (ETI). Promotes cell division and endoreduplication (e.g. in trichomes). The chain is Protein CPR-5 from Arabidopsis thaliana (Mouse-ear cress).